A 273-amino-acid polypeptide reads, in one-letter code: Formamidopyrimidine-DNA glycosylase (273 aa).

Residue proline 2 is the Schiff-base intermediate with DNA of the active site. Glutamate 3 acts as the Proton donor in catalysis. The active-site Proton donor; for beta-elimination activity is the lysine 58. Positions 91, 109, and 154 each coordinate DNA. An FPG-type zinc finger spans residues 239–273 (FCYARTGEPCRICKTPIRQIVQGQRSTFYCPNCQK). The active-site Proton donor; for delta-elimination activity is arginine 263.

It belongs to the FPG family. In terms of assembly, monomer. Zn(2+) is required as a cofactor.

It carries out the reaction Hydrolysis of DNA containing ring-opened 7-methylguanine residues, releasing 2,6-diamino-4-hydroxy-5-(N-methyl)formamidopyrimidine.. It catalyses the reaction 2'-deoxyribonucleotide-(2'-deoxyribose 5'-phosphate)-2'-deoxyribonucleotide-DNA = a 3'-end 2'-deoxyribonucleotide-(2,3-dehydro-2,3-deoxyribose 5'-phosphate)-DNA + a 5'-end 5'-phospho-2'-deoxyribonucleoside-DNA + H(+). Involved in base excision repair of DNA damaged by oxidation or by mutagenic agents. Acts as a DNA glycosylase that recognizes and removes damaged bases. Has a preference for oxidized purines, such as 7,8-dihydro-8-oxoguanine (8-oxoG). Has AP (apurinic/apyrimidinic) lyase activity and introduces nicks in the DNA strand. Cleaves the DNA backbone by beta-delta elimination to generate a single-strand break at the site of the removed base with both 3'- and 5'-phosphates. This Janthinobacterium sp. (strain Marseille) (Minibacterium massiliensis) protein is Formamidopyrimidine-DNA glycosylase.